The chain runs to 260 residues: tRNA pseudouridine synthase A (260 aa).

Asp-51 functions as the Nucleophile in the catalytic mechanism. A substrate-binding site is contributed by Tyr-109.

The protein belongs to the tRNA pseudouridine synthase TruA family. In terms of assembly, homodimer.

The enzyme catalyses uridine(38/39/40) in tRNA = pseudouridine(38/39/40) in tRNA. In terms of biological role, formation of pseudouridine at positions 38, 39 and 40 in the anticodon stem and loop of transfer RNAs. This is tRNA pseudouridine synthase A from Methylibium petroleiphilum (strain ATCC BAA-1232 / LMG 22953 / PM1).